A 150-amino-acid polypeptide reads, in one-letter code: Ribonuclease H (150 aa).

In terms of domain architecture, RNase H type-1 spans 1–141 (MRPVIIHTDG…ADQLARDGLT (141 aa)). Positions 9, 47, 69, and 133 each coordinate Mg(2+).

Belongs to the RNase H family. In terms of assembly, monomer. It depends on Mg(2+) as a cofactor.

The protein localises to the cytoplasm. It carries out the reaction Endonucleolytic cleavage to 5'-phosphomonoester.. In terms of biological role, endonuclease that specifically degrades the RNA of RNA-DNA hybrids. The sequence is that of Ribonuclease H from Rhodopseudomonas palustris (strain BisB5).